Here is a 216-residue protein sequence, read N- to C-terminus: Ribosomal RNA large subunit methyltransferase E (216 aa).

Gly-67, Trp-69, Asp-87, Asp-103, and Asp-128 together coordinate S-adenosyl-L-methionine. Lys-168 serves as the catalytic Proton acceptor.

Belongs to the class I-like SAM-binding methyltransferase superfamily. RNA methyltransferase RlmE family.

Its subcellular location is the cytoplasm. The enzyme catalyses uridine(2552) in 23S rRNA + S-adenosyl-L-methionine = 2'-O-methyluridine(2552) in 23S rRNA + S-adenosyl-L-homocysteine + H(+). Functionally, specifically methylates the uridine in position 2552 of 23S rRNA at the 2'-O position of the ribose in the fully assembled 50S ribosomal subunit. This chain is Ribosomal RNA large subunit methyltransferase E, found in Acinetobacter baylyi (strain ATCC 33305 / BD413 / ADP1).